We begin with the raw amino-acid sequence, 442 residues long: Trigger factor (442 aa).

One can recognise a PPIase FKBP-type domain in the interval 176–259 (GDFISLSLYV…VNAVIEISSP (84 aa)).

This sequence belongs to the FKBP-type PPIase family. Tig subfamily.

It is found in the cytoplasm. It carries out the reaction [protein]-peptidylproline (omega=180) = [protein]-peptidylproline (omega=0). Its function is as follows. Involved in protein export. Acts as a chaperone by maintaining the newly synthesized protein in an open conformation. Functions as a peptidyl-prolyl cis-trans isomerase. This Chlamydia trachomatis serovar A (strain ATCC VR-571B / DSM 19440 / HAR-13) protein is Trigger factor.